Consider the following 71-residue polypeptide: UPF0435 protein BLi00816/BL03111 (71 aa).

It belongs to the UPF0435 family.

This is UPF0435 protein BLi00816/BL03111 from Bacillus licheniformis (strain ATCC 14580 / DSM 13 / JCM 2505 / CCUG 7422 / NBRC 12200 / NCIMB 9375 / NCTC 10341 / NRRL NRS-1264 / Gibson 46).